The chain runs to 195 residues: Imidazoleglycerol-phosphate dehydratase (195 aa).

It belongs to the imidazoleglycerol-phosphate dehydratase family.

It localises to the cytoplasm. It carries out the reaction D-erythro-1-(imidazol-4-yl)glycerol 3-phosphate = 3-(imidazol-4-yl)-2-oxopropyl phosphate + H2O. The protein operates within amino-acid biosynthesis; L-histidine biosynthesis; L-histidine from 5-phospho-alpha-D-ribose 1-diphosphate: step 6/9. The polypeptide is Imidazoleglycerol-phosphate dehydratase (Exiguobacterium sp. (strain ATCC BAA-1283 / AT1b)).